A 267-amino-acid chain; its full sequence is O-methyltransferase (267 aa).

The S-adenosyl-L-methionine site is built by Gln-100 and His-145.

The protein belongs to the methyltransferase superfamily.

The protein operates within antifungal biosynthesis. O-methyltransferase; part of the gene cluster that mediates the biosynthesis of the tetrahydropyranyl antifungal agent lanomycin that acts as an inhibitor of CYP51 and blocks the ergosterol biosynthesis. The biosynthesis probably begins with the formation of an hexaketide, followed by methionine mediated alkylation of C-2 and C-6, and methylation of the reduced C-3 oxygen, pyran forming reductive ring closure, oxygenation of C-4, beta-keto reduction, enoyl reduction and dehydration of the remaining oxygens, and finally, acylation with glycine to complete the biosynthesis. This is O-methyltransferase from Pyrenophora dematioidea (Helminthosporium dematioideum).